The sequence spans 254 residues: 3-deoxy-manno-octulosonate cytidylyltransferase (254 aa).

Belongs to the KdsB family.

The protein resides in the cytoplasm. It catalyses the reaction 3-deoxy-alpha-D-manno-oct-2-ulosonate + CTP = CMP-3-deoxy-beta-D-manno-octulosonate + diphosphate. Its pathway is nucleotide-sugar biosynthesis; CMP-3-deoxy-D-manno-octulosonate biosynthesis; CMP-3-deoxy-D-manno-octulosonate from 3-deoxy-D-manno-octulosonate and CTP: step 1/1. It participates in bacterial outer membrane biogenesis; lipopolysaccharide biosynthesis. Its function is as follows. Activates KDO (a required 8-carbon sugar) for incorporation into bacterial lipopolysaccharide in Gram-negative bacteria. This Haemophilus influenzae (strain ATCC 51907 / DSM 11121 / KW20 / Rd) protein is 3-deoxy-manno-octulosonate cytidylyltransferase.